A 216-amino-acid polypeptide reads, in one-letter code: Adenylate kinase (216 aa).

10-15 (GAGKGT) lines the ATP pocket. The segment at 30-59 (STGDMFRAAMKAETEMGLQAKSFIDKGALV) is NMP. AMP is bound by residues Thr-31, Arg-36, 57 to 59 (ALV), 85 to 88 (GFPR), and Gln-92. Residues 126-163 (GRRICKECGATYHLEFNPPAKADVCDKCGGELYQRSDD) form an LID region. Arg-127 serves as a coordination point for ATP. Cys-130 and Cys-133 together coordinate Zn(2+). An ATP-binding site is contributed by 136 to 137 (TY). Cys-150 and Cys-153 together coordinate Zn(2+). AMP-binding residues include Arg-160 and Arg-171. Position 199 (Gln-199) interacts with ATP.

It belongs to the adenylate kinase family. In terms of assembly, monomer.

The protein localises to the cytoplasm. It carries out the reaction AMP + ATP = 2 ADP. It participates in purine metabolism; AMP biosynthesis via salvage pathway; AMP from ADP: step 1/1. Functionally, catalyzes the reversible transfer of the terminal phosphate group between ATP and AMP. Plays an important role in cellular energy homeostasis and in adenine nucleotide metabolism. This chain is Adenylate kinase, found in Bacillus cereus (strain ATCC 10987 / NRS 248).